The following is a 109-amino-acid chain: Staphostatin B (109 aa).

A binds to staphopain B region spans residues 97–101 (IGTSR).

Belongs to the protease inhibitor I57 (SspC) family. In terms of assembly, forms a stable non-covalent complex with prematurely activated/folded SspB.

The protein resides in the cytoplasm. Specifically inhibits the cysteine protease staphopain B (SspB) by blocking the active site of the enzyme. Probably required to protect cytoplasmic proteins from being degraded by prematurely activated/folded prostaphopain B. Also involved in growth capacity, viability and bacterial morphology. The sequence is that of Staphostatin B (sspC) from Staphylococcus aureus (strain MRSA252).